A 101-amino-acid polypeptide reads, in one-letter code: Protein translation factor SUI1 homolog (101 aa).

It belongs to the SUI1 family.

The polypeptide is Protein translation factor SUI1 homolog (Aeropyrum pernix (strain ATCC 700893 / DSM 11879 / JCM 9820 / NBRC 100138 / K1)).